Reading from the N-terminus, the 618-residue chain is Poly(A)-specific ribonuclease PARN-like (618 aa).

A divalent metal cation is bound by residues Ser-54, Gln-56, Asp-332, and Asn-418. The tract at residues 588–607 (ALESSDTDPDSDTKPSEIDW) is disordered.

The protein belongs to the CAF1 family. A divalent metal cation serves as cofactor.

The protein resides in the nucleus. It localises to the cytoplasm. The catalysed reaction is Exonucleolytic cleavage of poly(A) to 5'-AMP.. In terms of biological role, 3'-exoribonuclease that has a preference for poly(A) tails of mRNAs, thereby efficiently degrading poly(A) tails. Exonucleolytic degradation of the poly(A) tail is often the first step in the decay of eukaryotic mRNAs. The sequence is that of Poly(A)-specific ribonuclease PARN-like from Arabidopsis thaliana (Mouse-ear cress).